Reading from the N-terminus, the 236-residue chain is MSSIDKKELEKFEKISHNWWNKDGDFGILHCINPIRLEYIIEKITSHYNDISKLEILDVGCGGGLIATPLAAQGFNVTAIDALQSNIETATAYAKENGVKINYLQSTIEELKSNKLYDVVICLEVIEHVENVQQFILNLVQHIKPNGIAIISTINRMKKAYILGIIVAEYILGWVPKNTHNYSKFLKPSEIYEMLTDTGIEIKELKGLIYDMAKNEWKLSDNIEVNYFMYLERNTH.

The S-adenosyl-L-methionine site is built by Arg-36, Gly-60, Asp-81, and Leu-123.

It belongs to the methyltransferase superfamily. UbiG/COQ3 family.

The enzyme catalyses a 3-demethylubiquinol + S-adenosyl-L-methionine = a ubiquinol + S-adenosyl-L-homocysteine + H(+). It catalyses the reaction a 3-(all-trans-polyprenyl)benzene-1,2-diol + S-adenosyl-L-methionine = a 2-methoxy-6-(all-trans-polyprenyl)phenol + S-adenosyl-L-homocysteine + H(+). The protein operates within cofactor biosynthesis; ubiquinone biosynthesis. O-methyltransferase that catalyzes the 2 O-methylation steps in the ubiquinone biosynthetic pathway. This Rickettsia canadensis (strain McKiel) protein is Ubiquinone biosynthesis O-methyltransferase.